The sequence spans 713 residues: Macrophage-expressed gene 1 protein (713 aa).

A signal peptide spans 1-19; it reads MNSFMALVLIWMIIACAEA. The MACPF domain maps to 30 to 345; that stretch reads GFQICKNALK…TAVRHYYTFN (316 aa). Cysteine 34 and cysteine 70 are joined by a disulfide. 2 beta stranded membrane-spanning segments follow: residues 113-120 and 127-132; these read LSINTELA and GKFSTE. N-linked (GlcNAc...) asparagine glycosylation occurs at asparagine 185. The next 2 beta stranded transmembrane spans lie at 235–244 and 248–256; these read TVTASAGIAF and VNFKVETDY. Asparagine 269 carries N-linked (GlcNAc...) asparagine glycosylation. Cysteines 350 and 369 form a disulfide. N-linked (GlcNAc...) asparagine glycosylation is present at asparagine 375. Intrachain disulfides connect cysteine 385/cysteine 394, cysteine 432/cysteine 446, cysteine 436/cysteine 442, cysteine 531/cysteine 569, and cysteine 554/cysteine 574. The interval 410–653 is P2; sequence PPGYSPVHLL…GDSNGMSGGE (244 aa). Residues 654-674 form a helical membrane-spanning segment; that stretch reads AAGITLGVTIALGIVITLAIY.

The protein belongs to the MPEG1 family. In terms of assembly, homooligomer; predominantly forms a homooligomeric arc-shaped pore complex instead of complete rings of 16 subunits. Proteolytically processed in two steps to generate the Macrophage-expressed gene 1 protein, processed form: cleaved by trypsin in proximity of the helical transmembrane domain releases the ectodomain into the lysosomal lumen to orient the pore-forming domain toward the endogenous membranes, and processed by the asparagine endopeptidase (LGMN). Proteolytic processing in antigen-containing vesicles is pH-dependent. In terms of processing, monoubiquitinated in response to bacterial infection; ubiquitination is required for vesicular localization and antibacterial activity and can be blocked by bacterial cell cycle inhibiting factor (cif). As to expression, expressed constitutively in a variety of cell types including macrophages, microglia, neutrophils, T cells, marginal zone B cells, keratinocytes, splenocytes and intestinal epithelial cells.

The protein resides in the cytoplasmic vesicle membrane. It localises to the cytoplasmic vesicle. The protein localises to the phagosome membrane. Forms arc- and ring-shaped pre-pores on top of the membrane at neutral to slightly acidic pH conditions and converts to pores upon acidification. Undergoes transition from the pre-pore to the pore in a processive clockwise hand-over-hand process. In the pore state, 2 alpha-helical regions refold into transmembrane hairpins (TMH1 and TMH2) in each protomer that form in the ensemble complex giant beta-barrel transmembrane pores. Pore-forming protein involved in both innate and adaptive immunity. Plays a central role in antigen cross-presentation in dendritic cells by forming a pore in antigen-containing compartments, thereby promoting delivery of antigens for cross-presentation. Also involved in innate immune response following bacterial infection; shows antibacterial activity against a wide spectrum of Gram-positive, Gram-negative and acid-fast bacteria. Reduces the viability of the intracytosolic pathogen L.monocytogenes by inhibiting acidification of the phagocytic vacuole of host cells which restricts bacterial translocation from the vacuole to the cytosol. Required for the antibacterial activity of reactive oxygen species and nitric oxide. In terms of biological role, pore-forming protein that plays a central role in antigen cross-presentation in dendritic cells by mediating delivery of antigens for cross-presentation. Dendritic cells bridge innate and adaptive immunity by capturing exogenous antigens on MHC class-I molecules and presenting them to naive CD8(+) T-cells. Acts by forming a pore in antigen-containing compartments, promoting the release of antigens into the cytosol, enabling generation of MHCI:peptide complexes and T-cell priming. This is Macrophage-expressed gene 1 protein from Mus musculus (Mouse).